We begin with the raw amino-acid sequence, 338 residues long: UbiA prenyltransferase domain-containing protein 1 (338 aa).

Alanine 2 carries the N-acetylalanine modification. The next 8 helical transmembrane spans lie at 83 to 103 (LLVG…LVNT), 134 to 154 (FGVF…YLSP), 160 to 180 (LALI…GIGF), 188 to 208 (LIIL…IQVG), 209 to 229 (SLAI…EAIL), 245 to 267 (IVTL…LLFL), 277 to 297 (THCT…FSLE), and 315 to 335 (LNLL…AGSL).

Belongs to the UbiA prenyltransferase family. In terms of assembly, interacts with HMGCR and SOAT1. As to expression, ubiquitously expressed.

Its subcellular location is the endoplasmic reticulum membrane. It is found in the golgi apparatus membrane. It localises to the mitochondrion membrane. The protein resides in the cytoplasm. The protein localises to the nucleus. The catalysed reaction is menadiol + (2E,6E,10E)-geranylgeranyl diphosphate = menaquinol-4 + diphosphate. It carries out the reaction all-trans-decaprenyl diphosphate + 4-hydroxybenzoate = 4-hydroxy-3-(all-trans-decaprenyl)benzoate + diphosphate. It participates in quinol/quinone metabolism; menaquinone biosynthesis. It functions in the pathway cofactor biosynthesis; ubiquinone biosynthesis. In terms of biological role, prenyltransferase that mediates the formation of menaquinone-4 (MK-4) and coenzyme Q10. MK-4 is a vitamin K2 isoform present at high concentrations in the brain, kidney and pancreas, and is required for endothelial cell development. Mediates the conversion of phylloquinone (PK) into MK-4, probably by cleaving the side chain of phylloquinone (PK) to release 2-methyl-1,4-naphthoquinone (menadione; K3) and then prenylating it with geranylgeranyl pyrophosphate (GGPP) to form MK-4. Also plays a role in cardiovascular development independently of MK-4 biosynthesis, by acting as a coenzyme Q10 biosynthetic enzyme: coenzyme Q10, also named ubiquinone, plays an important antioxidant role in the cardiovascular system. Mediates biosynthesis of coenzyme Q10 in the Golgi membrane, leading to protect cardiovascular tissues from NOS3/eNOS-dependent oxidative stress. The sequence is that of UbiA prenyltransferase domain-containing protein 1 from Homo sapiens (Human).